Here is a 299-residue protein sequence, read N- to C-terminus: 4-diphosphocytidyl-2-C-methyl-D-erythritol kinase (299 aa).

Lys-16 is a catalytic residue. 97–107 (PVASGIGGGSA) contributes to the ATP binding site. The active site involves Asp-140.

The protein belongs to the GHMP kinase family. IspE subfamily.

The catalysed reaction is 4-CDP-2-C-methyl-D-erythritol + ATP = 4-CDP-2-C-methyl-D-erythritol 2-phosphate + ADP + H(+). It functions in the pathway isoprenoid biosynthesis; isopentenyl diphosphate biosynthesis via DXP pathway; isopentenyl diphosphate from 1-deoxy-D-xylulose 5-phosphate: step 3/6. In terms of biological role, catalyzes the phosphorylation of the position 2 hydroxy group of 4-diphosphocytidyl-2C-methyl-D-erythritol. The sequence is that of 4-diphosphocytidyl-2-C-methyl-D-erythritol kinase from Roseobacter denitrificans (strain ATCC 33942 / OCh 114) (Erythrobacter sp. (strain OCh 114)).